The primary structure comprises 718 residues: Heat shock 70 kDa protein 6, chloroplastic (718 aa).

A chloroplast-targeting transit peptide spans 1 to 92 (MASSAAQIHV…IDLGTTNSAV (92 aa)). The disordered stretch occupies residues 671-718 (QSLYNQPGAGGPGAGPSPGGEGASSGDSSSSKGGDGDDVIDADFTDSQ). Gly residues predominate over residues 678 to 693 (GAGGPGAGPSPGGEGA). The segment covering 706–718 (GDDVIDADFTDSQ) has biased composition (acidic residues).

The protein belongs to the heat shock protein 70 (TC 1.A.33) family. DnaK subfamily. In terms of assembly, interacts with geminivirus movement protein (MP).

The protein resides in the plastid. The protein localises to the chloroplast stroma. Acts redundantly with HSP70-7 in the thermotolerance of germinating seeds. Plays an important role in the protein precursor import into chloroplasts. Its function is as follows. In cooperation with other chaperones, Hsp70s are key components that facilitate folding of de novo synthesized proteins, assist translocation of precursor proteins into organelles, and are responsible for degradation of damaged protein under stress conditions. This chain is Heat shock 70 kDa protein 6, chloroplastic (HSP70-6), found in Arabidopsis thaliana (Mouse-ear cress).